Reading from the N-terminus, the 313-residue chain is MTQWYPASPALWQGRDDSIEAPDARRLFQTVTRSETFSPENWQQKIALMGFACDEGVKRNAGRPGAAGAPDALRKALANMASHQGHERLVDLGNWVAPTPDLEGAQQALRDAVSRCLRAGMRTLVLGGGHETAFGHGAGVLDAFAQESVGIINLDAHLDLRQTDRATSGTPFRQLAQLCDAQSRAFHYACFGVSRAANTQALWREAQWRNVTVVEDLDCHDALAQMAQFIDKVDKIYLTIDLDVLPVWEMPAVSAPAALGVPLIQVLRLIEPVCRSGKLQAADLVEFNPRFDDDGAAARVAARLGWQIAHWWR.

Mn(2+)-binding residues include His130, Asp155, His157, Asp159, Asp241, and Asp243.

It belongs to the arginase family. Mn(2+) serves as cofactor.

The enzyme catalyses N-formimidoyl-L-glutamate + H2O = formamide + L-glutamate. It participates in amino-acid degradation; L-histidine degradation into L-glutamate; L-glutamate from N-formimidoyl-L-glutamate (hydrolase route): step 1/1. Its function is as follows. Catalyzes the conversion of N-formimidoyl-L-glutamate to L-glutamate and formamide. The polypeptide is Formimidoylglutamase (Salmonella agona (strain SL483)).